We begin with the raw amino-acid sequence, 68 residues long: Lantibiotic mersacidin (68 aa).

A disordered region spans residues 1 to 28 (MSQEAIIRSWKDPFSRENSTQNPAGNPF). The propeptide occupies 1–48 (MSQEAIIRSWKDPFSRENSTQNPAGNPFSELKEAQMDKLVGAGDMEAA). A cross-link (beta-methyllanthionine (Cys-Thr)) is located at residues 49–50 (CT). Cross-links (beta-methyllanthionine (Thr-Cys)) lie at residues 52–60 (TLPGGGGVC) and 61–66 (TLTSEC). A cross-link (S-(2-aminovinyl)-3-methyl-D-cysteine (Thr-Cys)) is located at residues 63–68 (TSECIC). 2,3-didehydroalanine (Ser) is present on serine 64.

It belongs to the type B lantibiotic family. In terms of processing, maturation of lantibiotics involves the enzymatic conversion of Thr, and Ser into dehydrated AA and the formation of thioether bonds with cysteine. The carboxy-terminal beta-methyllanthionine undergoes decarboxylation. This is followed by membrane translocation and cleavage of the modified precursor.

Its function is as follows. Kills a number of Gram-positive bacteria. Acts at the level of cell wall biosynthesis by interfering with bacterial peptidoglycan biosynthesis. Specifically inhibits the conversion of the lipid II intermediate into polymeric nascent glycan strands by transglycosylation. May interact with the peptidoglycan precursor rather than with the enzyme. The polypeptide is Lantibiotic mersacidin (mrsA) (Bacillus sp. (strain HIL-Y85/54728)).